Consider the following 153-residue polypeptide: MTERKGMEEINREEFQEVVVNVGRVTKVVKGGRRFRFNALVVVGNKNGLVGFGLGKAKEVPDAIKKAVDDAFKNLIHVTIKGTTIAHDIEHKYNASRILLKPASEGTGVIAGGSTRPIVELAGIKDILTKSLGSNNPYNVVHATFDALAKIKA.

The S5 DRBM domain maps to 15 to 78; that stretch reads FQEVVVNVGR…DDAFKNLIHV (64 aa).

The protein belongs to the universal ribosomal protein uS5 family. In terms of assembly, part of the 30S ribosomal subunit. Contacts proteins S4 and S8.

Its function is as follows. With S4 and S12 plays an important role in translational accuracy. Located at the back of the 30S subunit body where it stabilizes the conformation of the head with respect to the body. The chain is Small ribosomal subunit protein uS5 from Helicobacter acinonychis (strain Sheeba).